The following is a 488-amino-acid chain: Proline--tRNA ligase (488 aa).

Belongs to the class-II aminoacyl-tRNA synthetase family. ProS type 3 subfamily. In terms of assembly, homodimer.

It localises to the cytoplasm. The enzyme catalyses tRNA(Pro) + L-proline + ATP = L-prolyl-tRNA(Pro) + AMP + diphosphate. Its function is as follows. Catalyzes the attachment of proline to tRNA(Pro) in a two-step reaction: proline is first activated by ATP to form Pro-AMP and then transferred to the acceptor end of tRNA(Pro). The chain is Proline--tRNA ligase from Borrelia garinii subsp. bavariensis (strain ATCC BAA-2496 / DSM 23469 / PBi) (Borreliella bavariensis).